Consider the following 85-residue polypeptide: U4-theraphotoxin-Hhn1a (85 aa).

A signal peptide spans 1 to 22 (MKVTLIAILTCAAVLVLRTTAA). A propeptide spanning residues 23–48 (EELEAESQLMEVGMPDTELAAVDEER) is cleaved from the precursor. 3 disulfide bridges follow: Cys52-Cys66, Cys56-Cys77, and Cys71-Cys82.

This sequence belongs to the neurotoxin 12 (Hwtx-2) family. 02 (Hwtx-2) subfamily. As to quaternary structure, monomer. In terms of tissue distribution, expressed by the venom gland.

The protein localises to the secreted. Its function is as follows. Neurotoxin active on both insects and mammals. This is U4-theraphotoxin-Hhn1a from Cyriopagopus hainanus (Chinese bird spider).